The primary structure comprises 364 residues: FNIP repeat-containing protein DDB_G0277323 (364 aa).

FNIP repeat units follow at residues 57–98 (MNIE…DLKY), 155–198 (YDCL…FGWT), 214–244 (LRVL…FGSS), 245–271 (FNQV…NQPI), and 295–340 (FNQP…FINN).

This Dictyostelium discoideum (Social amoeba) protein is FNIP repeat-containing protein DDB_G0277323.